The primary structure comprises 186 residues: Iodotyrosine deiodinase (186 aa).

FMN-binding positions include 11–15, 38–39, and serine 39; these read RKTVR and PS. The 3-iodo-L-tyrosine site is built by methionine 41, glutamate 68, tyrosine 72, and lysine 92. The L-tyrosine site is built by methionine 41, glutamate 68, tyrosine 72, and lysine 92. Residue arginine 176 participates in FMN binding.

It belongs to the nitroreductase family. Homodimer. It depends on FMN as a cofactor.

The catalysed reaction is 2 iodide + L-tyrosine + 2 NADP(+) = 3,5-diiodo-L-tyrosine + 2 NADPH + H(+). It carries out the reaction iodide + L-tyrosine + NADP(+) = 3-iodo-L-tyrosine + NADPH. It catalyses the reaction 3-iodo-L-tyrosine + iodide + NADP(+) = 3,5-diiodo-L-tyrosine + NADPH + H(+). The enzyme catalyses L-tyrosine + chloride + NADP(+) = 3-chloro-L-tyrosine + NADPH. The catalysed reaction is bromide + L-tyrosine + NADP(+) = 3-bromo-L-tyrosine + NADPH. In terms of biological role, catalyzes the dehalogenation of halotyrosines such as 3-bromo-L-tyrosine, 3-chloro-L-tyrosine, 3-iodo-L-tyrosine and 3,5-diiodo-L-tyrosine. Activity towards 2-iodophenol is weak. In Thermotoga neapolitana (strain ATCC 49049 / DSM 4359 / NBRC 107923 / NS-E), this protein is Iodotyrosine deiodinase.